We begin with the raw amino-acid sequence, 154 residues long: Myoglobin (154 aa).

In terms of domain architecture, Globin spans 2-148; it reads GLSDGEWQLV…FRNDIAAKYK (147 aa). Residue Ser4 is modified to Phosphoserine. His65 provides a ligand contact to nitrite. An O2-binding site is contributed by His65. Phosphothreonine is present on Thr68. His94 is a binding site for heme b.

The protein belongs to the globin family. As to quaternary structure, monomeric.

The protein localises to the cytoplasm. It localises to the sarcoplasm. It carries out the reaction Fe(III)-heme b-[protein] + nitric oxide + H2O = Fe(II)-heme b-[protein] + nitrite + 2 H(+). It catalyses the reaction H2O2 + AH2 = A + 2 H2O. Its function is as follows. Monomeric heme protein which primary function is to store oxygen and facilitate its diffusion within muscle tissues. Reversibly binds oxygen through a pentacoordinated heme iron and enables its timely and efficient release as needed during periods of heightened demand. Depending on the oxidative conditions of tissues and cells, and in addition to its ability to bind oxygen, it also has a nitrite reductase activity whereby it regulates the production of bioactive nitric oxide. Under stress conditions, like hypoxia and anoxia, it also protects cells against reactive oxygen species thanks to its pseudoperoxidase activity. The chain is Myoglobin (MB) from Proechimys guairae (Guaira spiny rat).